Reading from the N-terminus, the 291-residue chain is Pirin-like protein (291 aa).

This sequence belongs to the pirin family.

The protein localises to the nucleus. The polypeptide is Pirin-like protein (Solanum lycopersicum (Tomato)).